The chain runs to 84 residues: Xenoxin-1 (84 aa).

A signal peptide spans 1-18 (MRYAIVFFLVCVITLGEA). Disulfide bonds link Cys-21-Cys-42, Cys-35-Cys-55, Cys-61-Cys-76, and Cys-77-Cys-82.

In terms of tissue distribution, expressed by the skin dorsal glands.

Its subcellular location is the secreted. Functionally, lacks alpha-neurotoxic activity, has apparently no antibacterial activity, nor anti-coagulant potency. This is Xenoxin-1 (xenoxin-1) from Xenopus laevis (African clawed frog).